Consider the following 387-residue polypeptide: MKNISILGATGSIGSQTLDVIRKSNGELKLIGVTANTSVKKVIEIIEEFKPSYVGMMDAVSTHEIKKYCEEHNKKIKVLEGIEGLDKIASLDEIDMVVTSVVGMIGLEPTMKAIEAKKDIALANKETLVVAGEIVMKAAKENNVKIFPVDSEHSAIFQCLRGNDINTLRKIILTASGGPFRGRTLESLEDIKVEDALKHPKWNMGRKISIDSATLMNKGLEVIEAHWLFNCDYDNIQVVVHPQSIVHSMVEYNDGSIVAQLGAQDMRLPIQYALLYENREKRIADTIDFYEISQLTFEKPDIDTFKALNLAFKAGKAGRLMPTILNGANEAAVELFLDRKIKFLQIADIIERCMEVFKTQANKELTLENIIELDKEVKEYVIKNAVL.

Thr10, Gly11, Ser12, Ile13, and Asn124 together coordinate NADPH. Lys125 serves as a coordination point for 1-deoxy-D-xylulose 5-phosphate. Residue Glu126 coordinates NADPH. Asp150 serves as a coordination point for Mn(2+). Positions 151, 152, 176, and 199 each coordinate 1-deoxy-D-xylulose 5-phosphate. Residue Glu152 participates in Mn(2+) binding. Gly205 contributes to the NADPH binding site. Ser212, Asn217, Lys218, and Glu221 together coordinate 1-deoxy-D-xylulose 5-phosphate. Residue Glu221 coordinates Mn(2+).

It belongs to the DXR family. The cofactor is Mg(2+). Mn(2+) serves as cofactor.

The enzyme catalyses 2-C-methyl-D-erythritol 4-phosphate + NADP(+) = 1-deoxy-D-xylulose 5-phosphate + NADPH + H(+). Its pathway is isoprenoid biosynthesis; isopentenyl diphosphate biosynthesis via DXP pathway; isopentenyl diphosphate from 1-deoxy-D-xylulose 5-phosphate: step 1/6. Functionally, catalyzes the NADPH-dependent rearrangement and reduction of 1-deoxy-D-xylulose-5-phosphate (DXP) to 2-C-methyl-D-erythritol 4-phosphate (MEP). The sequence is that of 1-deoxy-D-xylulose 5-phosphate reductoisomerase from Clostridium beijerinckii (strain ATCC 51743 / NCIMB 8052) (Clostridium acetobutylicum).